Here is a 104-residue protein sequence, read N- to C-terminus: Growth-regulated protein homolog alpha (104 aa).

A signal peptide spans 1-30; sequence MAPAATAAAPRLLRAAMLFLLLVAAGRRAA. Disulfide bonds link Cys-40–Cys-66 and Cys-42–Cys-82.

The protein belongs to the intercrine alpha (chemokine CxC) family.

Its subcellular location is the secreted. This Bos taurus (Bovine) protein is Growth-regulated protein homolog alpha.